Reading from the N-terminus, the 502-residue chain is MEFSTKALDWAKAGALAAKSDCLVIGLFESQTLAGAAKALDVATKGLVARLVKLGDFEGKRGTSLLLHEVAGVGAARVLLVGLGKEADFTDRAYAEAVRTALRALASTKAASVTWTLTEHTARDKDTAWAVLTAVTLIREASYRFIERHPELKSKRDKNGTGLRKLVLAVPAADAKTASVAAARGTAIANGMDLTRDLGNLPSNICTPTYLANTARQIAKDFKLKVEVLGRKQIEALKMGAFLAVTKGSVEPPAFIVLRYEGGPAKQAPVVLVGKGITFDTGGISLKPGEGMDEMKYDMCGAASVLGTLRAVAEMGLKQNVIAVVPTCENMPSGIATKPGDVVTSMSGQTIEILNTDAEGRLILCDALTYVERFKPAVVIDVATLTGACIIALGHINTGMYARSDALADALVAAGKQSLDTAWRMPLDEEYQEQLKSNFADMGNIGGRPAGSVTAACFLARFTEKYDWAHLDIAGTAWKSGAAKGATGRPVPLLTRFLMDRG.

The Mn(2+) site is built by Lys-275 and Asp-280. Lys-287 is an active-site residue. Asp-298, Asp-357, and Glu-359 together coordinate Mn(2+). Arg-361 is a catalytic residue.

It belongs to the peptidase M17 family. It depends on Mn(2+) as a cofactor.

It localises to the cytoplasm. The enzyme catalyses Release of an N-terminal amino acid, Xaa-|-Yaa-, in which Xaa is preferably Leu, but may be other amino acids including Pro although not Arg or Lys, and Yaa may be Pro. Amino acid amides and methyl esters are also readily hydrolyzed, but rates on arylamides are exceedingly low.. It catalyses the reaction Release of an N-terminal amino acid, preferentially leucine, but not glutamic or aspartic acids.. Its function is as follows. Presumably involved in the processing and regular turnover of intracellular proteins. Catalyzes the removal of unsubstituted N-terminal amino acids from various peptides. This chain is Probable cytosol aminopeptidase, found in Ralstonia pickettii (strain 12J).